We begin with the raw amino-acid sequence, 238 residues long: UDP-2,3-diacylglucosamine hydrolase (238 aa).

Mn(2+) is bound by residues Asp8, His10, Asp41, Asn78, and His113. Residue 78–79 (NR) participates in substrate binding. Asp121, Ser159, Asn163, Lys166, and His194 together coordinate substrate. His194 and His196 together coordinate Mn(2+).

The protein belongs to the LpxH family. The cofactor is Mn(2+).

It localises to the cell inner membrane. It carries out the reaction UDP-2-N,3-O-bis[(3R)-3-hydroxytetradecanoyl]-alpha-D-glucosamine + H2O = 2-N,3-O-bis[(3R)-3-hydroxytetradecanoyl]-alpha-D-glucosaminyl 1-phosphate + UMP + 2 H(+). It functions in the pathway glycolipid biosynthesis; lipid IV(A) biosynthesis; lipid IV(A) from (3R)-3-hydroxytetradecanoyl-[acyl-carrier-protein] and UDP-N-acetyl-alpha-D-glucosamine: step 4/6. In terms of biological role, hydrolyzes the pyrophosphate bond of UDP-2,3-diacylglucosamine to yield 2,3-diacylglucosamine 1-phosphate (lipid X) and UMP by catalyzing the attack of water at the alpha-P atom. Involved in the biosynthesis of lipid A, a phosphorylated glycolipid that anchors the lipopolysaccharide to the outer membrane of the cell. The sequence is that of UDP-2,3-diacylglucosamine hydrolase from Shewanella halifaxensis (strain HAW-EB4).